The sequence spans 171 residues: MWTLKSSLVLLLCLTCSYAFMFSSLRQKTSEPQGKVQYGEHFRIRQNLPEHTQGWLGSKWLWLLFVVVPFVILQCQRDSEKNKEQSPPGLRGGQLHSPLKKKRNASPNKDCAFNTLMELEVELMKFVSKVRNLKRAMATGSGSNLRLRKSEMPADPYHVTICEIWGEESSS.

The first 19 residues, 1–19 (MWTLKSSLVLLLCLTCSYA), serve as a signal peptide directing secretion. Residues 20–52 (FMFSSLRQKTSEPQGKVQYGEHFRIRQNLPEHT) lie on the Extracellular side of the membrane. Residues 53–73 (QGWLGSKWLWLLFVVVPFVIL) form a helical membrane-spanning segment. The Cytoplasmic segment spans residues 74 to 171 (QCQRDSEKNK…CEIWGEESSS (98 aa)). A disordered region spans residues 81-107 (KNKEQSPPGLRGGQLHSPLKKKRNASP). Positions 114 to 139 (NTLMELEVELMKFVSKVRNLKRAMAT) form a coiled coil.

It belongs to the FAM209 family. In terms of assembly, interacts with DPY19L2. Interacts with CYLC1; the interaction may be relevant for proper acrosome attachment to the nuclear envelope.

The protein localises to the nucleus inner membrane. Its function is as follows. May play a role in sperm acrosome biogenesis. The polypeptide is Protein FAM209A (Homo sapiens (Human)).